Reading from the N-terminus, the 209-residue chain is uncharacterized protein (209 aa).

This is an uncharacterized protein from Escherichia coli (strain K12).